A 212-amino-acid chain; its full sequence is MKGLIGRKIGMTRIFTDEGISIPITIIQVEPNIITQVKSIQTDGYYAYQVTTGTKKPNLVIKPEAGHFAKAGTKAGRSLWEFRLKHEEKPINIGEILTLEYFTNIKKVDITGTSKGKGFSGTVKRWNFHMQDASHGNSLSHRVTGSIGQNQTPGKVFKGKKMAGHMGNKRVTIQNLDIIRIDLRKNLLLIKGAIPGAPGNDLIIKPAIKLSH.

A compositionally biased stretch (polar residues) spans 139–153; that stretch reads LSHRVTGSIGQNQTP. Residues 139-161 are disordered; the sequence is LSHRVTGSIGQNQTPGKVFKGKK. Residue Gln151 is modified to N5-methylglutamine.

This sequence belongs to the universal ribosomal protein uL3 family. In terms of assembly, part of the 50S ribosomal subunit. Forms a cluster with proteins L14 and L19. In terms of processing, methylated by PrmB.

In terms of biological role, one of the primary rRNA binding proteins, it binds directly near the 3'-end of the 23S rRNA, where it nucleates assembly of the 50S subunit. The sequence is that of Large ribosomal subunit protein uL3 from Baumannia cicadellinicola subsp. Homalodisca coagulata.